A 282-amino-acid polypeptide reads, in one-letter code: tRNA pseudouridine synthase A (282 aa).

Catalysis depends on aspartate 61, which acts as the Nucleophile. Tyrosine 119 serves as a coordination point for substrate.

This sequence belongs to the tRNA pseudouridine synthase TruA family. In terms of assembly, homodimer.

The enzyme catalyses uridine(38/39/40) in tRNA = pseudouridine(38/39/40) in tRNA. In terms of biological role, formation of pseudouridine at positions 38, 39 and 40 in the anticodon stem and loop of transfer RNAs. The protein is tRNA pseudouridine synthase A of Nostoc sp. (strain PCC 7120 / SAG 25.82 / UTEX 2576).